The chain runs to 579 residues: Mitochondrial distribution and morphology protein 36 (579 aa).

Residues 1–27 form a disordered region; the sequence is MDENGTVKPGYELKGLNSGNSRSNMDK. Position 42 is a phosphoserine (Ser42). 2 disordered regions span residues 378 to 401 and 446 to 518; these read TPIN…GRRL and DNKH…ESQS. Positions 379–390 are enriched in polar residues; it reads PINSSDSDNLSN. A compositionally biased stretch (basic and acidic residues) spans 446–463; the sequence is DNKHSTKDTDSNIRRNEH. The segment covering 495-518 has biased composition (low complexity); that stretch reads PSQSSSRMSTLPLSPSSSLLESQS.

In terms of biological role, involved in mitochondrial distribution and morphology. This is Mitochondrial distribution and morphology protein 36 (MDM36) from Saccharomyces cerevisiae (strain ATCC 204508 / S288c) (Baker's yeast).